Here is a 126-residue protein sequence, read N- to C-terminus: Glycine cleavage system H protein (126 aa).

The Lipoyl-binding domain maps to Thr-21–Lys-103. Lys-62 bears the N6-lipoyllysine mark.

Belongs to the GcvH family. In terms of assembly, the glycine cleavage system is composed of four proteins: P, T, L and H. The cofactor is (R)-lipoate.

In terms of biological role, the glycine cleavage system catalyzes the degradation of glycine. The H protein shuttles the methylamine group of glycine from the P protein to the T protein. The protein is Glycine cleavage system H protein of Vibrio cholerae serotype O1 (strain ATCC 39541 / Classical Ogawa 395 / O395).